The following is a 114-amino-acid chain: Iron-sulfur cluster insertion protein ErpA (114 aa).

Iron-sulfur cluster contacts are provided by Cys-42, Cys-106, and Cys-108.

This sequence belongs to the HesB/IscA family. Homodimer. It depends on iron-sulfur cluster as a cofactor.

In terms of biological role, required for insertion of 4Fe-4S clusters for at least IspG. This chain is Iron-sulfur cluster insertion protein ErpA, found in Pseudoalteromonas atlantica (strain T6c / ATCC BAA-1087).